A 475-amino-acid polypeptide reads, in one-letter code: Ribulose bisphosphate carboxylase large chain (475 aa).

Residues 1-2 constitute a propeptide that is removed on maturation; sequence MS. Proline 3 is subject to N-acetylproline. An N6,N6,N6-trimethyllysine modification is found at lysine 14. Residues asparagine 123 and threonine 173 each coordinate substrate. Lysine 175 (proton acceptor) is an active-site residue. Substrate is bound at residue lysine 177. Residues lysine 201, aspartate 203, and glutamate 204 each coordinate Mg(2+). Lysine 201 is subject to N6-carboxylysine. Catalysis depends on histidine 294, which acts as the Proton acceptor. 3 residues coordinate substrate: arginine 295, histidine 327, and serine 379.

This sequence belongs to the RuBisCO large chain family. Type I subfamily. As to quaternary structure, heterohexadecamer of 8 large chains and 8 small chains; disulfide-linked. The disulfide link is formed within the large subunit homodimers. Mg(2+) is required as a cofactor. The disulfide bond which can form in the large chain dimeric partners within the hexadecamer appears to be associated with oxidative stress and protein turnover.

It localises to the plastid. The protein resides in the chloroplast. The enzyme catalyses 2 (2R)-3-phosphoglycerate + 2 H(+) = D-ribulose 1,5-bisphosphate + CO2 + H2O. The catalysed reaction is D-ribulose 1,5-bisphosphate + O2 = 2-phosphoglycolate + (2R)-3-phosphoglycerate + 2 H(+). In terms of biological role, ruBisCO catalyzes two reactions: the carboxylation of D-ribulose 1,5-bisphosphate, the primary event in carbon dioxide fixation, as well as the oxidative fragmentation of the pentose substrate in the photorespiration process. Both reactions occur simultaneously and in competition at the same active site. The sequence is that of Ribulose bisphosphate carboxylase large chain from Nandina domestica (Heavenly bamboo).